Here is a 562-residue protein sequence, read N- to C-terminus: Arginine--tRNA ligase (562 aa).

Positions 136–146 (ANPTGPMHMGN) match the 'HIGH' region motif.

The protein belongs to the class-I aminoacyl-tRNA synthetase family. As to quaternary structure, monomer.

The protein localises to the cytoplasm. It carries out the reaction tRNA(Arg) + L-arginine + ATP = L-arginyl-tRNA(Arg) + AMP + diphosphate. The chain is Arginine--tRNA ligase (argS) from Caldanaerobacter subterraneus subsp. tengcongensis (strain DSM 15242 / JCM 11007 / NBRC 100824 / MB4) (Thermoanaerobacter tengcongensis).